The following is a 298-amino-acid chain: Keratin-associated protein 10-11 (298 aa).

Tandem repeats lie at residues 26–30 (CCEPP), 36–40 (CCAPA), 57–61 (CCQAA), 79–83 (CCQQS), 89–93 (CCTSS), 99–103 (CCVPV), 104–108 (CCKTV), 109–113 (CCKPV), 114–118 (CCVPV), 119–123 (CCGAA), 126–130 (CCRQS), 136–140 (CCASS), 146–150 (CCVPV), 151–155 (CCKPV), 156–160 (CCVST), 168–172 (CCQQS), 178–182 (CCTSS), 188–192 (CCVPV), 193–197 (CCKTV), 203–207 (CCVPV), 225–229 (CCTTS), 230–234 (CCRPS), 249–253 (CCVPV), 256–260 (CCAPT), and 267–271 (CCRPA). A 25 X 5 AA repeats of C-C-X(3) region spans residues 26 to 271 (CCEPPCSAPS…SCQSSCCRPA (246 aa)).

It belongs to the KRTAP type 10 family. In terms of assembly, interacts with hair keratins. As to expression, restricted to a narrow region of the hair fiber cuticle, lying approximately 20 cell layers above the apex of the dermal papilla of the hair root; not detected in any other tissues.

Functionally, in the hair cortex, hair keratin intermediate filaments are embedded in an interfilamentous matrix, consisting of hair keratin-associated proteins (KRTAP), which are essential for the formation of a rigid and resistant hair shaft through their extensive disulfide bond cross-linking with abundant cysteine residues of hair keratins. The matrix proteins include the high-sulfur and high-glycine-tyrosine keratins. This Homo sapiens (Human) protein is Keratin-associated protein 10-11 (KRTAP10-11).